A 257-amino-acid chain; its full sequence is MLAKRIIPCLDVKDGQVVKGVQFRNHEIIGDIVPLAQRYAEEGADELVFYDITASSDGRVVDKSWVARVAEVIDIPFCVAGGIKTAEDAAKILEFGADKVSINSPALANPELITELADKFGVQCIVVGIDSYFDKETGKYQVYQFTGDEERTKATKWETKDWVQEVQKRGAGEIVLNMMNQDGVRNGYDLEQLNMVREVCHVPLIASGGAGEMVHFADVYKKTNVDGALAASVFHKQIINIGELKEYLAQQKIEVRR.

Catalysis depends on residues D11 and D130.

It belongs to the HisA/HisF family. In terms of assembly, heterodimer of HisH and HisF.

It localises to the cytoplasm. The catalysed reaction is 5-[(5-phospho-1-deoxy-D-ribulos-1-ylimino)methylamino]-1-(5-phospho-beta-D-ribosyl)imidazole-4-carboxamide + L-glutamine = D-erythro-1-(imidazol-4-yl)glycerol 3-phosphate + 5-amino-1-(5-phospho-beta-D-ribosyl)imidazole-4-carboxamide + L-glutamate + H(+). Its pathway is amino-acid biosynthesis; L-histidine biosynthesis; L-histidine from 5-phospho-alpha-D-ribose 1-diphosphate: step 5/9. Its function is as follows. IGPS catalyzes the conversion of PRFAR and glutamine to IGP, AICAR and glutamate. The HisF subunit catalyzes the cyclization activity that produces IGP and AICAR from PRFAR using the ammonia provided by the HisH subunit. In Aliivibrio salmonicida (strain LFI1238) (Vibrio salmonicida (strain LFI1238)), this protein is Imidazole glycerol phosphate synthase subunit HisF.